Here is a 300-residue protein sequence, read N- to C-terminus: MTFTEYMGFFQDKYELICMADEERDNFCLDVESSWNITNMVLLDEATWPTYTNKCYYDVSGITEQVWINMRLNINIIPANNYTASENINITIASPGPITTICPQAITISQNTTLTCQQMAIAYEIPTAGIRNLKIISIAIGVAAVNGTNPTTSNTTATFVSAPTTTVTGTTSECCEWHTVFSGDTCQLIEAEYGITLEKFIALNTYVNSTCGNIWPDYAYCVSGIATANSSTSTTAITATSTSPPIPVTTSGTLTTATTSGTITTPAPAQTGMVSGCTTFYEAISGDGLLRDRHIVRHHA.

Residues 176–222 enclose the LysM domain; the sequence is EWHTVFSGDTCQLIEAEYGITLEKFIALNTYVNSTCGNIWPDYAYCV.

It belongs to the secreted LysM effector family.

Non-secreted LysM effector that might be involved in manipulation of host defenses for successful infection. This is Non-secreted LysM effector LysM16 from Penicillium expansum (Blue mold rot fungus).